The primary structure comprises 640 residues: Preterminal protein (640 aa).

The interval 232–257 (PSQEGEGEERENPDRASSRPRPQETV) is disordered. The Nuclear localization signal motif lies at 351-360 (RLPVRRRRRR). An O-(5'-phospho-DNA)-serine modification is found at serine 549. The tract at residues 614–640 (GADVPLPAMPPGPEPPLPPGARPRHRF) is disordered. The span at 620–634 (PAMPPGPEPPLPPGA) shows a compositional bias: pro residues.

This sequence belongs to the adenoviridae terminal protein family. Heterodimer with the polymerase; this heterodimer binds to bp 9 to 18 of the genome. Interacts with host POU2F1; POU2F1 binds to the auxiliary sequences in the inverted terminal repeats and tethers the pTP-POL heterodimer to the origin DNA thereby participating in the assembly of the pre-initiation complex (POL-TP-DBP-NFIA-POU2F1). In terms of processing, preterminal protein is used to replicate viral genome, upon genomic encapsidation it is processed first into iTP and finally into TP by adenovirus protease.

Its subcellular location is the host nucleus matrix. Functionally, protein covalently bound to the viral DNA that acts as a primer for viral genomic replication by DNA strand displacement. Assembles on the viral origin of replication in an initiation complex with viral polymerase, DBP, host NFIA and host POU2F1/OCT1. During initiation, the polymerase covalently couples the first dCTP with Ser-580 of pTP. The terminal protein stimulates the template activity over 20 fold compared to protein-free templates. Neo-synthesized viral genomes are linked to two preterminal proteins, one for each 5' end. These new genomes are encapsidated in the nucleus, and during capsid maturation by viral protease, preterminal protein is first cleaved into intermediary (iTP), then into mature TP. May play a role in host nuclear matrix localization of genomic DNA. This is Preterminal protein from Human adenovirus B serotype 7 (HAdV-7).